The following is an 89-amino-acid chain: Small ribosomal subunit protein uS17 (89 aa).

Belongs to the universal ribosomal protein uS17 family. In terms of assembly, part of the 30S ribosomal subunit.

One of the primary rRNA binding proteins, it binds specifically to the 5'-end of 16S ribosomal RNA. This chain is Small ribosomal subunit protein uS17, found in Xylella fastidiosa (strain Temecula1 / ATCC 700964).